The sequence spans 4499 residues: Dynein alpha chain, flagellar outer arm (4499 aa).

Positions 1–1677 (MSIFWEVPNA…RIRICDASFP (1677 aa)) are stem. 6 Kelch repeats span residues 29–84 (RFVL…ALDD), 86–135 (RLLV…RFGS), 137–183 (VFIF…RFDH), 199–245 (KLLI…VCDG), 253–304 (KVFS…FDVK), and 307–358 (SLLI…IRGL). A Filamin repeat occupies 425 to 534 (FANTAARNCI…IRGSPFTVKC (110 aa)). Kelch repeat units lie at residues 562-608 (ELVL…VLSD) and 610-661 (ELVV…AVSA). A disordered region spans residues 653 to 720 (PKGAAAVSAE…SRPVSAKPAP (68 aa)). The segment covering 655–689 (GAAAVSAEPSAEPAAEPAAEPAAEPDADAPAAEPA) has biased composition (low complexity). The segment covering 690–705 (AEGEEGAVPAEGEEGA) has biased composition (acidic residues). 2 Kelch repeats span residues 750–801 (LYVM…ATGN) and 864–913 (KLFL…TLSG). Coiled-coil stretches lie at residues 1261–1334 (ELHK…MIAN) and 1382–1450 (KKEL…RRAF). AAA regions lie at residues 1678–1921 (YGYE…VLVV) and 1981–2225 (DVIV…KSYS). ATP is bound by residues 1716–1723 (GPAGTGKT) and 2019–2026 (GPTGTGRT). One copy of the Kelch 11 repeat lies at 2269–2317 (MIWAFGGGLVEKDGIPYRRNFDKWFKQTWTTVKIPGKGTVYDYFVNPKT). AAA stretches follow at residues 2331–2577 (DYDG…VFQG) and 2679–2928 (EYNE…ERRY). 2369–2376 (GGAGVGKT) serves as a coordination point for ATP. Positions 2655–2688 (LADKAYDEVADYTSLYKTLTEALNEYNETNAAMD) form a coiled coil. An ATP-binding site is contributed by 2717–2724 (GVGGSGKQ). The stretch at 3003–3023 (VGVEKEKVNAENAAAQVEAEK) forms a coiled coil. Residues 3003 to 3262 (VGVEKEKVNA…ERWALTVEQL (260 aa)) form a stalk region. One copy of the Kelch 12 repeat lies at 3070-3117 (LKKPPPGVDDITAVVIILLENNPKDKSWQAAQKLMNNVDKFLERVKSF). 2 coiled-coil regions span residues 3170–3262 (DVVQ…VEQL) and 3486–3515 (NKER…ELED). Residues 3320–3550 (LVDDALVAGW…AKRVSTEISE (231 aa)) form an AAA 5 region. The tract at residues 3614-3687 (GRKKGKGLKK…VGDAEDEDDE (74 aa)) is disordered. The segment covering 3630–3653 (QPMDHQSLMEKARRSSGVGDRRPS) has biased composition (basic and acidic residues). An AAA 6 region spans residues 3843–4082 (LQNFCEHMMG…LTTCGDVLYN (240 aa)).

Belongs to the dynein heavy chain family. In terms of assembly, consists of at least 3 heavy chains (alpha, beta and gamma), 2 intermediate chains and 8 light chains.

The protein resides in the cell projection. It localises to the cilium. It is found in the flagellum. Its subcellular location is the cytoplasm. The protein localises to the cytoskeleton. The protein resides in the flagellum axoneme. Its function is as follows. Force generating protein of eukaryotic cilia and flagella. Produces force towards the minus ends of microtubules. Dynein has ATPase activity; the force-producing power stroke is thought to occur on release of ADP. This chain is Dynein alpha chain, flagellar outer arm (ODA11), found in Chlamydomonas reinhardtii (Chlamydomonas smithii).